The chain runs to 240 residues: MSASVAARWVVLDIEGTLTPTSQVHVVLYDYARPRLGPWIHDHPEDPVVRKAVEDVKSEAGLPAEATAEQVVAVLHGWMDADRKAAPLKTLQGLIWQDGYARGELTTDYFADVVPALRAWRQRGLVLAVFSSGSVAGQVASFSHTTSGDLRGLFAQHFDTVNAGPKRERGSYEAIAAALGAARPLQIVFLSDVPAELDAAAQAGWHTVGLARPGEPYADADFGSHPAVGAFDDIDIEVVS.

Belongs to the HAD-like hydrolase superfamily. MasA/MtnC family. In terms of assembly, monomer. Requires Mg(2+) as cofactor.

The enzyme catalyses 5-methylsulfanyl-2,3-dioxopentyl phosphate + H2O = 1,2-dihydroxy-5-(methylsulfanyl)pent-1-en-3-one + phosphate. It participates in amino-acid biosynthesis; L-methionine biosynthesis via salvage pathway; L-methionine from S-methyl-5-thio-alpha-D-ribose 1-phosphate: step 3/6. The protein operates within amino-acid biosynthesis; L-methionine biosynthesis via salvage pathway; L-methionine from S-methyl-5-thio-alpha-D-ribose 1-phosphate: step 4/6. Its function is as follows. Bifunctional enzyme that catalyzes the enolization of 2,3-diketo-5-methylthiopentyl-1-phosphate (DK-MTP-1-P) into the intermediate 2-hydroxy-3-keto-5-methylthiopentenyl-1-phosphate (HK-MTPenyl-1-P), which is then dephosphorylated to form the acireductone 1,2-dihydroxy-3-keto-5-methylthiopentene (DHK-MTPene). The protein is Enolase-phosphatase E1 of Saccharopolyspora erythraea (strain ATCC 11635 / DSM 40517 / JCM 4748 / NBRC 13426 / NCIMB 8594 / NRRL 2338).